Here is a 206-residue protein sequence, read N- to C-terminus: MARTLLILCTLMAWAWTGEAVMFKLTPNTQKCLKEDIQANQLVIGEYEVSDVPGQVIDYIARDTKGHILSQQEHITKGKFSFMSEVYDAYEICFISKVPPHQRGIPQEVSLSTKKGVETKSYEGIGEASKLKPLEVDLKRLEDLSDSIVRDFVLMRKREEEMRDTNEKTNSRVLFFSIFSMCCLLGLATWQVLYLRRYFKAKKLIE.

The first 20 residues, 1–20, serve as a signal peptide directing secretion; that stretch reads MARTLLILCTLMAWAWTGEA. Topologically, residues 21 to 172 are lumenal; it reads VMFKLTPNTQ…RDTNEKTNSR (152 aa). One can recognise a GOLD domain in the interval 30–140; the sequence is QKCLKEDIQA…LKPLEVDLKR (111 aa). The chain crosses the membrane as a helical span at residues 173-193; sequence VLFFSIFSMCCLLGLATWQVL. Residues 194–206 lie on the Cytoplasmic side of the membrane; that stretch reads YLRRYFKAKKLIE.

This sequence belongs to the EMP24/GP25L family.

It localises to the membrane. Its function is as follows. Eca and bai are essential, though not redundant, for dorsoventral patterning of the embryo. Specifically required during early embryogenesis for the activity of maternal tkv, while the zygotic tkv is not affected. This is Transmembrane emp24 domain-containing protein bai from Drosophila ananassae (Fruit fly).